The primary structure comprises 183 residues: Probable chorismate pyruvate-lyase 2 (183 aa).

Residues arginine 76, leucine 114, and glutamate 166 each contribute to the substrate site.

It belongs to the UbiC family.

The protein localises to the cytoplasm. The enzyme catalyses chorismate = 4-hydroxybenzoate + pyruvate. Its pathway is cofactor biosynthesis; ubiquinone biosynthesis. Functionally, removes the pyruvyl group from chorismate, with concomitant aromatization of the ring, to provide 4-hydroxybenzoate (4HB) for the ubiquinone pathway. This Pseudomonas fluorescens (strain Pf0-1) protein is Probable chorismate pyruvate-lyase 2.